The primary structure comprises 97 residues: Aspartyl/glutamyl-tRNA(Asn/Gln) amidotransferase subunit C (97 aa).

This sequence belongs to the GatC family. As to quaternary structure, heterotrimer of A, B and C subunits.

It carries out the reaction L-glutamyl-tRNA(Gln) + L-glutamine + ATP + H2O = L-glutaminyl-tRNA(Gln) + L-glutamate + ADP + phosphate + H(+). The enzyme catalyses L-aspartyl-tRNA(Asn) + L-glutamine + ATP + H2O = L-asparaginyl-tRNA(Asn) + L-glutamate + ADP + phosphate + 2 H(+). Functionally, allows the formation of correctly charged Asn-tRNA(Asn) or Gln-tRNA(Gln) through the transamidation of misacylated Asp-tRNA(Asn) or Glu-tRNA(Gln) in organisms which lack either or both of asparaginyl-tRNA or glutaminyl-tRNA synthetases. The reaction takes place in the presence of glutamine and ATP through an activated phospho-Asp-tRNA(Asn) or phospho-Glu-tRNA(Gln). The protein is Aspartyl/glutamyl-tRNA(Asn/Gln) amidotransferase subunit C of Prochlorococcus marinus (strain SARG / CCMP1375 / SS120).